The primary structure comprises 170 residues: Large ribosomal subunit protein uL10 (170 aa).

This sequence belongs to the universal ribosomal protein uL10 family. Part of the ribosomal stalk of the 50S ribosomal subunit. The N-terminus interacts with L11 and the large rRNA to form the base of the stalk. The C-terminus forms an elongated spine to which L12 dimers bind in a sequential fashion forming a multimeric L10(L12)X complex.

In terms of biological role, forms part of the ribosomal stalk, playing a central role in the interaction of the ribosome with GTP-bound translation factors. The sequence is that of Large ribosomal subunit protein uL10 from Corynebacterium urealyticum (strain ATCC 43042 / DSM 7109).